We begin with the raw amino-acid sequence, 94 residues long: Small ribosomal subunit protein bS6 (94 aa).

It belongs to the bacterial ribosomal protein bS6 family.

Binds together with bS18 to 16S ribosomal RNA. The sequence is that of Small ribosomal subunit protein bS6 from Clostridium botulinum (strain 657 / Type Ba4).